The sequence spans 214 residues: Putative ras-related protein Rab-5B (214 aa).

GTP is bound at residue 56–63; sequence GEMNTGKT. Positions 77-85 match the Effector region motif; sequence TDSTIGAAF. Residues 103-107 and 161-164 each bind GTP; these read DTAGQ and NKVD.

Belongs to the small GTPase superfamily. Rab family. In terms of processing, this sequence lacks the C-terminal cysteine motifs subject to isoprenylation in other Rab proteins.

The protein is Putative ras-related protein Rab-5B (rab5B) of Dictyostelium discoideum (Social amoeba).